The following is a 258-amino-acid chain: Global transcriptional regulator CodY (258 aa).

Positions 1 to 156 (MSSLLTKTRM…SATIVGMEML (156 aa)) are GAF domain. The segment at residues 204–223 (ASKIADKVGITRSVIVNALR) is a DNA-binding region (H-T-H motif).

Belongs to the CodY family.

It localises to the cytoplasm. DNA-binding global transcriptional regulator which is involved in the adaptive response to starvation and acts by directly or indirectly controlling the expression of numerous genes in response to nutrient availability. During rapid exponential growth, CodY is highly active and represses genes whose products allow adaptation to nutrient depletion. This chain is Global transcriptional regulator CodY, found in Clostridium beijerinckii (strain ATCC 51743 / NCIMB 8052) (Clostridium acetobutylicum).